The chain runs to 229 residues: Carbonic anhydrase 2 (229 aa).

The Zn(2+) site is built by C42, D44, H98, and C101.

This sequence belongs to the beta-class carbonic anhydrase family. The cofactor is Zn(2+).

It carries out the reaction hydrogencarbonate + H(+) = CO2 + H2O. The protein is Carbonic anhydrase 2 (can) of Haemophilus influenzae (strain ATCC 51907 / DSM 11121 / KW20 / Rd).